The chain runs to 283 residues: Protein MGARP (283 aa).

Residues 1–36 (MYLRRAVSKTLALPRRAPPGPAPLGKDASLRRMSSR) form a disordered region. The Cytoplasmic portion of the chain corresponds to 1-41 (MYLRRAVSKTLALPRRAPPGPAPLGKDASLRRMSSRKFPGT). Residues 42–64 (SGSNMIYYLVVGVTVSAGGYYTY) form a helical; Anchor for type IV membrane protein membrane-spanning segment. The Mitochondrial intermembrane portion of the chain corresponds to 65–283 (KALTSKQVRR…VTEETASPQG (219 aa)). 2 disordered regions span residues 78 to 101 (VAEPKEQTKAELQPLPGEKEEHVA) and 118 to 283 (AESV…SPQG). The segment covering 128–160 (EAAVVLPEESQASAPSEVPAEAAVVEASLSSSE) has biased composition (low complexity). Polar residues-rich tracts occupy residues 171 to 184 (VETTESVPESTQEV) and 199 to 220 (ADTSQEGADTSQEGADTSQEGA). A compositionally biased stretch (basic and acidic residues) spans 221–245 (DTTKEEADNSKEAEGTTTEDPRSIS).

As to quaternary structure, interacts with RHOT1/Miro-1, RHOT2/Miro-2, TRAK1/OIP106 and TRAK2/GRIF1. As to expression, expressed in the ovary, testis, brain, adrenal glands and the compartments of the visual nervous system. Expressed in corneal endothelium (CE) (at protein level). Expressed in steroidogenic tissues with the highest level of expression observed in the adrenal gland. Weakly expressed in placenta. Weakly expressed in astrocytes and neurons under normoxia. Strongly expressed in astrocytes and neurons under hypoxia. Expressed in each layer of the retina, with particularly higher staining in the inner segment of the photoreceptor (IS), the outer plexiform layer (OPL) and the ganglion cell layer (GCL).

Its subcellular location is the mitochondrion. It is found in the mitochondrion outer membrane. It localises to the mitochondrion inner membrane. Its function is as follows. Plays a role in the trafficking of mitochondria along microtubules. Regulates the kinesin-mediated axonal transport of mitochondria to nerve terminals along microtubules during hypoxia. Participates in the translocation of TRAK2/GRIF1 from the cytoplasm to the mitochondrion. Also plays a role in steroidogenesis through maintenance of mitochondrial abundance and morphology. Plays an inhibitory role during neocortex development by regulating mitochondrial morphology, distribution and motility in neocortical neurons. This is Protein MGARP (Mgarp) from Mus musculus (Mouse).